The sequence spans 197 residues: ATP-dependent Clp protease proteolytic subunit (197 aa).

The Nucleophile role is filled by Ser102. The active site involves His127.

The protein belongs to the peptidase S14 family. In terms of assembly, fourteen ClpP subunits assemble into 2 heptameric rings which stack back to back to give a disk-like structure with a central cavity, resembling the structure of eukaryotic proteasomes.

It is found in the cytoplasm. It carries out the reaction Hydrolysis of proteins to small peptides in the presence of ATP and magnesium. alpha-casein is the usual test substrate. In the absence of ATP, only oligopeptides shorter than five residues are hydrolyzed (such as succinyl-Leu-Tyr-|-NHMec, and Leu-Tyr-Leu-|-Tyr-Trp, in which cleavage of the -Tyr-|-Leu- and -Tyr-|-Trp bonds also occurs).. In terms of biological role, cleaves peptides in various proteins in a process that requires ATP hydrolysis. Has a chymotrypsin-like activity. Plays a major role in the degradation of misfolded proteins. The polypeptide is ATP-dependent Clp protease proteolytic subunit (Buchnera aphidicola subsp. Schizaphis graminum (strain Sg)).